An 88-amino-acid polypeptide reads, in one-letter code: UPF0335 protein Mnod_5968 (88 aa).

Belongs to the UPF0335 family.

This chain is UPF0335 protein Mnod_5968, found in Methylobacterium nodulans (strain LMG 21967 / CNCM I-2342 / ORS 2060).